The following is a 455-amino-acid chain: tRNA modification GTPase MnmE (455 aa).

(6S)-5-formyl-5,6,7,8-tetrahydrofolate contacts are provided by Arg-26, Glu-86, and Arg-125. A TrmE-type G domain is found at 222-376 (GLKTAIIGRP…VEEKINQIFF (155 aa)). Position 232 (Asn-232) interacts with K(+). GTP is bound by residues 232-237 (NVGKSS), 251-257 (TDIAGTT), and 276-279 (DTAG). A Mg(2+)-binding site is contributed by Ser-236. Positions 251, 253, and 256 each coordinate K(+). A Mg(2+)-binding site is contributed by Thr-257. Residue Lys-455 participates in (6S)-5-formyl-5,6,7,8-tetrahydrofolate binding.

It belongs to the TRAFAC class TrmE-Era-EngA-EngB-Septin-like GTPase superfamily. TrmE GTPase family. Homodimer. Heterotetramer of two MnmE and two MnmG subunits. The cofactor is K(+).

It is found in the cytoplasm. Its function is as follows. Exhibits a very high intrinsic GTPase hydrolysis rate. Involved in the addition of a carboxymethylaminomethyl (cmnm) group at the wobble position (U34) of certain tRNAs, forming tRNA-cmnm(5)s(2)U34. This Lactococcus lactis subsp. lactis (strain IL1403) (Streptococcus lactis) protein is tRNA modification GTPase MnmE.